Consider the following 134-residue polypeptide: MVKVVNSSGKHKTATARATVMKGTGKVRINKIPLELYTPELAMMKISEPLLIAGNDVVSGLDINVDVRGGGIIGQANAVRTAVARGIVEWTNDTAIRDNFAAYDRNLLVSDSRQKESKNFGGPGARAKYQKSYR.

Residues 114–134 are disordered; the sequence is QKESKNFGGPGARAKYQKSYR.

Belongs to the universal ribosomal protein uS9 family.

The sequence is that of Small ribosomal subunit protein uS9 from Methanosarcina acetivorans (strain ATCC 35395 / DSM 2834 / JCM 12185 / C2A).